We begin with the raw amino-acid sequence, 301 residues long: Bifunctional protein FolD (301 aa).

Residues 166-168, Ser-191, and Ile-232 each bind NADP(+); that span reads GKS.

Belongs to the tetrahydrofolate dehydrogenase/cyclohydrolase family. In terms of assembly, homodimer.

The enzyme catalyses (6R)-5,10-methylene-5,6,7,8-tetrahydrofolate + NADP(+) = (6R)-5,10-methenyltetrahydrofolate + NADPH. It carries out the reaction (6R)-5,10-methenyltetrahydrofolate + H2O = (6R)-10-formyltetrahydrofolate + H(+). The protein operates within one-carbon metabolism; tetrahydrofolate interconversion. Catalyzes the oxidation of 5,10-methylenetetrahydrofolate to 5,10-methenyltetrahydrofolate and then the hydrolysis of 5,10-methenyltetrahydrofolate to 10-formyltetrahydrofolate. The polypeptide is Bifunctional protein FolD (Orientia tsutsugamushi (strain Boryong) (Rickettsia tsutsugamushi)).